The following is a 360-amino-acid chain: CCA-adding enzyme (360 aa).

Positions 8 and 11 each coordinate ATP. Residues Gly8 and Arg11 each contribute to the CTP site. 2 residues coordinate Mg(2+): Asp21 and Asp23. ATP is bound by residues Arg91, Arg137, and Arg140. The CTP site is built by Arg91, Arg137, and Arg140.

It belongs to the tRNA nucleotidyltransferase/poly(A) polymerase family. Bacterial CCA-adding enzyme type 2 subfamily. The cofactor is Mg(2+).

It carries out the reaction a tRNA precursor + 2 CTP + ATP = a tRNA with a 3' CCA end + 3 diphosphate. It catalyses the reaction a tRNA with a 3' CCA end + 2 CTP + ATP = a tRNA with a 3' CCACCA end + 3 diphosphate. Its function is as follows. Catalyzes the addition and repair of the essential 3'-terminal CCA sequence in tRNAs without using a nucleic acid template. Adds these three nucleotides in the order of C, C, and A to the tRNA nucleotide-73, using CTP and ATP as substrates and producing inorganic pyrophosphate. tRNA 3'-terminal CCA addition is required both for tRNA processing and repair. Also involved in tRNA surveillance by mediating tandem CCA addition to generate a CCACCA at the 3' terminus of unstable tRNAs. While stable tRNAs receive only 3'-terminal CCA, unstable tRNAs are marked with CCACCA and rapidly degraded. In Francisella tularensis subsp. tularensis (strain FSC 198), this protein is CCA-adding enzyme.